The following is a 104-amino-acid chain: Protamine-2 (104 aa).

Residues 1 to 91 (MVRYRMRSPS…RRGCRRSRRR (91 aa)) are disordered. Residues serine 8, serine 10, and serine 33 each carry the phosphoserine modification. Residues 33 to 44 (SPERVEDYGRTE) are compositionally biased toward basic and acidic residues. Residues 45-91 (RGHHHRHRRCKRLHRIHKRRRSCRRRRRHSCRHRRRHRRGCRRSRRR) show a composition bias toward basic residues.

It belongs to the protamine P2 family. Interacts with TDRP. Proteolytic processing into mature chains is required for histone eviction during spermatogenesis. Transition proteins (TNP1 and TNP2) are required for processing. In terms of tissue distribution, testis.

It localises to the nucleus. Its subcellular location is the chromosome. Its function is as follows. Protamines substitute for histones in the chromatin of sperm during the haploid phase of spermatogenesis. They compact sperm DNA into a highly condensed, stable and inactive complex. The protein is Protamine-2 (Prm2) of Rattus norvegicus (Rat).